A 392-amino-acid polypeptide reads, in one-letter code: Queuine tRNA-ribosyltransferase (392 aa).

Aspartate 92 acts as the Proton acceptor in catalysis. Residues 92–96 (DSGGF), aspartate 146, glutamine 188, and glycine 215 each bind substrate. The tract at residues 246–252 (GVGSPED) is RNA binding. Aspartate 265 functions as the Nucleophile in the catalytic mechanism. The segment at 270-274 (TRLGR) is RNA binding; important for wobble base 34 recognition. 4 residues coordinate Zn(2+): cysteine 303, cysteine 305, cysteine 308, and histidine 334.

The protein belongs to the queuine tRNA-ribosyltransferase family. As to quaternary structure, homodimer. Within each dimer, one monomer is responsible for RNA recognition and catalysis, while the other monomer binds to the replacement base PreQ1. Requires Zn(2+) as cofactor.

The enzyme catalyses 7-aminomethyl-7-carbaguanine + guanosine(34) in tRNA = 7-aminomethyl-7-carbaguanosine(34) in tRNA + guanine. Its pathway is tRNA modification; tRNA-queuosine biosynthesis. Its function is as follows. Catalyzes the base-exchange of a guanine (G) residue with the queuine precursor 7-aminomethyl-7-deazaguanine (PreQ1) at position 34 (anticodon wobble position) in tRNAs with GU(N) anticodons (tRNA-Asp, -Asn, -His and -Tyr). Catalysis occurs through a double-displacement mechanism. The nucleophile active site attacks the C1' of nucleotide 34 to detach the guanine base from the RNA, forming a covalent enzyme-RNA intermediate. The proton acceptor active site deprotonates the incoming PreQ1, allowing a nucleophilic attack on the C1' of the ribose to form the product. After dissociation, two additional enzymatic reactions on the tRNA convert PreQ1 to queuine (Q), resulting in the hypermodified nucleoside queuosine (7-(((4,5-cis-dihydroxy-2-cyclopenten-1-yl)amino)methyl)-7-deazaguanosine). The polypeptide is Queuine tRNA-ribosyltransferase (Herpetosiphon aurantiacus (strain ATCC 23779 / DSM 785 / 114-95)).